Here is a 1376-residue protein sequence, read N- to C-terminus: Spike glycoprotein (1376 aa).

The first 13 residues, 1 to 13, serve as a signal peptide directing secretion; sequence MLFVFILLLPSCL. Over 14–1317 the chain is Extracellular; that stretch reads GYIGDFRCIQ…GTYEMYVKWP (1304 aa). Residues 15 to 296 form the BetaCoV S1-NTD domain; that stretch reads YIGDFRCIQT…SYISEIKCKT (282 aa). The interval 15 to 330 is receptor binding site; that stretch reads YIGDFRCIQT…RRVPNLPDCK (316 aa). Disulfide bonds link Cys-21–Cys-158, Cys-153–Cys-187, Cys-165–Cys-246, Cys-284–Cys-294, and Cys-329–Cys-354. Residues Asn-31, Asn-60, and Asn-134 are each glycosylated (N-linked (GlcNAc...) asparagine; by host). Asn-192 carries N-linked (GlcNAc...) asparagine; by host glycosylation. The 292-residue stretch at 327 to 618 folds into the BetaCoV S1-CTD domain; the sequence is PDCKIEEWLT…GINSGTTCST (292 aa). Residue Asn-357 is glycosylated (N-linked (GlcNAc...) asparagine; by host). 2 disulfide bridges follow: Cys-372–Cys-425 and Cys-384–Cys-616. An important for the neurovirulence region spans residues 429–599; that stretch reads YSLPKNNVTI…HDTCLVNDRC (171 aa). N-linked (GlcNAc...) asparagine; by host glycans are attached at residues Asn-435, Asn-582, Asn-677, Asn-709, Asn-717, Asn-740, Asn-789, and Asn-806. Fusion peptide regions lie at residues 922–943 and 941–961; these read SAIE…VEAY and EAYN…VQSF. N-linked (GlcNAc...) asparagine; by host glycosylation occurs at Asn-945. Cys-946 and Cys-957 are joined by a disulfide. Residues 1022–1072 form a heptad repeat 1 region; sequence QKMIASAFNNALGAIQEGFDATNSALGKIQSVVNANAEALNNLLNQLSNRF. Positions 1051–1095 form a coiled coil; sequence QSVVNANAEALNNLLNQLSNRFGAISASLQEILTRLDAVEAKAQI. Residues Asn-1232, Asn-1242, Asn-1261, Asn-1277, and Asn-1298 are each glycosylated (N-linked (GlcNAc...) asparagine; by host). The interval 1266 to 1306 is heptad repeat 2; that stretch reads APDLSLDFEKLNVTFLDLTYEMNRIQDAIKKLNESYINLKE. Positions 1279-1307 form a coiled coil; that stretch reads TFLDLTYEMNRIQDAIKKLNESYINLKEV. Residues 1318 to 1338 traverse the membrane as a helical segment; that stretch reads WYVWLLIGLAGVAVCVLLFFI. Residues 1339–1376 are Cytoplasmic-facing; that stretch reads CCCTGCGSCCFRKCGSCCDEYGGHQDSIVIHNISAHED. The KxHxx motif lies at 1372 to 1376; sequence SAHED.

Belongs to the betacoronaviruses spike protein family. Homotrimer; each monomer consists of a S1 and a S2 subunit. The resulting peplomers protrude from the virus surface as spikes. In terms of processing, specific enzymatic cleavages in vivo yield mature proteins. The precursor is processed into S1 and S2 by host cell furin or another cellular protease to yield the mature S1 and S2 proteins. Additionally, a second cleavage leads to the release of a fusion peptide after viral attachment to host cell receptor. Post-translationally, the cytoplasmic Cys-rich domain is palmitoylated. Spike glycoprotein is digested within host endosomes.

Its subcellular location is the virion membrane. The protein resides in the host endoplasmic reticulum-Golgi intermediate compartment membrane. It localises to the host cell membrane. Its function is as follows. Attaches the virion to the cell membrane by interacting with host receptor, initiating the infection. Mediates fusion of the virion and cellular membranes by acting as a class I viral fusion protein. Under the current model, the protein has at least three conformational states: pre-fusion native state, pre-hairpin intermediate state, and post-fusion hairpin state. During viral and target cell membrane fusion, the coiled coil regions (heptad repeats) assume a trimer-of-hairpins structure, positioning the fusion peptide in close proximity to the C-terminal region of the ectodomain. The formation of this structure appears to drive apposition and subsequent fusion of viral and target cell membranes. In terms of biological role, acts as a viral fusion peptide which is unmasked following S2 cleavage occurring upon virus endocytosis. The sequence is that of Spike glycoprotein from Murine coronavirus (strain 4) (MHV-4).